Reading from the N-terminus, the 114-residue chain is UPF0757 protein YmgG (114 aa).

This sequence belongs to the UPF0757 family.

This is UPF0757 protein YmgG from Escherichia fergusonii (strain ATCC 35469 / DSM 13698 / CCUG 18766 / IAM 14443 / JCM 21226 / LMG 7866 / NBRC 102419 / NCTC 12128 / CDC 0568-73).